Consider the following 564-residue polypeptide: Septation ring formation regulator EzrA (564 aa).

At 1–4 (MVLY) the chain is on the extracellular side. Residues 5-23 (IILAIIVIILIAVGVLFYL) traverse the membrane as a helical segment. Topologically, residues 24 to 564 (RSNKRQIIEK…KHIEEEVIKQ (541 aa)) are cytoplasmic. Coiled coils occupy residues 99-138 (SFNA…YKDN), 190-223 (DGNY…LIRE), 271-300 (LISR…LIEH), 350-435 (VRQF…RRLL), and 471-550 (VKQL…ESVE).

It belongs to the EzrA family.

The protein localises to the cell membrane. In terms of biological role, negative regulator of FtsZ ring formation; modulates the frequency and position of FtsZ ring formation. Inhibits FtsZ ring formation at polar sites. Interacts either with FtsZ or with one of its binding partners to promote depolymerization. This is Septation ring formation regulator EzrA from Staphylococcus aureus (strain NCTC 8325 / PS 47).